Consider the following 507-residue polypeptide: Sugar transport protein 8 (507 aa).

Residues 1–21 lie on the Cytoplasmic side of the membrane; that stretch reads MAVVISSNGNSKSFDAKMTVY. Transmembrane regions (helical) follow at residues 22–42, 79–99, 116–136, 139–159, 166–186, 200–220, 281–301, 319–339, 346–366, 382–402, 419–439, and 448–468; these read VFIC…DIGI, FLQL…FFAS, IFFL…MLII, ILLG…LSEI, GGLN…ANIV, IALG…LLIC, FVIG…AIMF, LSAV…IFLV, FLLL…GIIL, LVVV…WGPL, GFAL…QAFL, and GIFF…LFFV. The Cytoplasmic portion of the chain corresponds to 469–507; sequence PETKGVSIDDMRDSVWKLHWYWKRFMLEEDEHDVEKRTD.

The protein belongs to the major facilitator superfamily. Sugar transporter (TC 2.A.1.1) family.

Its subcellular location is the membrane. Its function is as follows. Mediates an active uptake of hexoses, probably by sugar/hydrogen symport. This Arabidopsis thaliana (Mouse-ear cress) protein is Sugar transport protein 8 (STP8).